We begin with the raw amino-acid sequence, 379 residues long: Cyclin-dependent kinase-like 4 (379 aa).

Positions 4–286 constitute a Protein kinase domain; sequence YEKLAKTGEG…CSQLLESSYF (283 aa). ATP contacts are provided by residues 10–18 and Lys33; that span reads TGEGSYGVV. Positions 45 to 51 match the [NKR]KIAxRE motif; it reads KKIALRE. Asp126 functions as the Proton acceptor in the catalytic mechanism.

Belongs to the protein kinase superfamily. CMGC Ser/Thr protein kinase family. CDC2/CDKX subfamily.

It is found in the cytoplasm. The enzyme catalyses L-seryl-[protein] + ATP = O-phospho-L-seryl-[protein] + ADP + H(+). The catalysed reaction is L-threonyl-[protein] + ATP = O-phospho-L-threonyl-[protein] + ADP + H(+). This is Cyclin-dependent kinase-like 4 (CDKL4) from Homo sapiens (Human).